The primary structure comprises 263 residues: 3-methyl-2-oxobutanoate hydroxymethyltransferase (263 aa).

The Mg(2+) site is built by D45 and D84. 3-methyl-2-oxobutanoate is bound by residues 45–46 (DS), D84, and K112. Residue E114 participates in Mg(2+) binding. Residue E181 is the Proton acceptor of the active site.

It belongs to the PanB family. As to quaternary structure, homodecamer; pentamer of dimers. Mg(2+) is required as a cofactor.

Its subcellular location is the cytoplasm. The enzyme catalyses 3-methyl-2-oxobutanoate + (6R)-5,10-methylene-5,6,7,8-tetrahydrofolate + H2O = 2-dehydropantoate + (6S)-5,6,7,8-tetrahydrofolate. It participates in cofactor biosynthesis; (R)-pantothenate biosynthesis; (R)-pantoate from 3-methyl-2-oxobutanoate: step 1/2. Its function is as follows. Catalyzes the reversible reaction in which hydroxymethyl group from 5,10-methylenetetrahydrofolate is transferred onto alpha-ketoisovalerate to form ketopantoate. This is 3-methyl-2-oxobutanoate hydroxymethyltransferase from Buchnera aphidicola subsp. Acyrthosiphon pisum (strain APS) (Acyrthosiphon pisum symbiotic bacterium).